We begin with the raw amino-acid sequence, 1238 residues long: Cryptic loci regulator protein 1 (1238 aa).

Disordered regions lie at residues 133 to 156, 196 to 237, 277 to 303, 546 to 568, 696 to 735, and 784 to 824; these read TQQQ…TEPN, PFSN…PSSI, ASLY…LGSM, QKSV…IDTT, SDNT…PFVH, and TLKE…QSRS. The span at 214–223 shows a compositional bias: polar residues; that stretch reads NVKNNSKKTA. Positions 224 to 237 are enriched in low complexity; it reads SSVNSNHSSIPSSI. Residues 291–303 are compositionally biased toward polar residues; sequence SSRNTSSYNLGSM. A compositionally biased stretch (low complexity) spans 702–723; the sequence is SLPKPSNSKLSSISSDGDASSN. The span at 785–796 shows a compositional bias: basic and acidic residues; sequence LKEDASSTKQAK. The segment covering 810–819 has biased composition (polar residues); sequence NDVSKNNSGE. Residues 1062 to 1087 form a C2H2-type zinc finger; the sequence is LNCEVSNCKKCFSNYEDMFKHLQHSH.

As to quaternary structure, interacts with clr3.

It localises to the nucleus. It is found in the chromosome. The protein localises to the centromere. The protein resides in the telomere. Its function is as follows. Regulates silencing of the mat2 and mat3 loci. Organizes the chromatin structure of the mating-type region where it also participates in establishing the 'cold spot' for recombination. Required for proper positioning of nucleosomes at heterochromatic loci and for transcriptional gene silencing (TGS) function of the Snf2/Hdac-containing repressor complex (SHREC). This is Cryptic loci regulator protein 1 (clr1) from Schizosaccharomyces pombe (strain 972 / ATCC 24843) (Fission yeast).